Consider the following 154-residue polypeptide: Ribonuclease H (154 aa).

The 142-residue stretch at 1–142 (MTKHVEIFTD…CDELARTAAE (142 aa)) folds into the RNase H type-1 domain. Mg(2+) is bound by residues aspartate 10, glutamate 48, aspartate 70, and aspartate 134.

It belongs to the RNase H family. As to quaternary structure, monomer. Requires Mg(2+) as cofactor.

It is found in the cytoplasm. The catalysed reaction is Endonucleolytic cleavage to 5'-phosphomonoester.. Functionally, endonuclease that specifically degrades the RNA of RNA-DNA hybrids. The polypeptide is Ribonuclease H (Vibrio campbellii (strain ATCC BAA-1116)).